The chain runs to 372 residues: Protein phosphatase Mn(2+)-dependent 1K (372 aa).

Residues 1-29 (MSTAALITLVRSGGNQVRRRVLLSSRLLQ) constitute a mitochondrion transit peptide. The segment at 34–55 (VTPTCHSSTSEPRCSRFDPDGS) is disordered. The tract at residues 46 to 61 (RCSRFDPDGSGSPATW) is critical for association with the BCKDH complex. The PPM-type phosphatase domain occupies 94 to 346 (NVGCASQIGK…DNSTAVVVPF (253 aa)). Residues D127 and G128 each contribute to the Mn(2+) site. Phosphoserine is present on S248. D298 and D337 together coordinate Mn(2+).

The protein belongs to the PP2C family. As to quaternary structure, monomer. Interacts with E1 and E2 components of the branched-chain alpha-ketoacid dehydrogenase (BCKDH) complex; this interaction requires colocalization in mitochondria. Interacts with BCKDHA but not with BCKDHB of the E1 component. Interacts with the 24-meric E2 core composed of DBT monomers with a 24:1 stoichiometry; the N-terminal region (residues 49-61) of PPM1K and C-terminal linker of the lipoyl domain of DBT (residues 145-160) are critical for this interaction, whereas the lipoyl prosthetic group is dispensable. Competes with BCKDK for binding to the E2 core; this interaction is modulated by branched-chain alpha-keto acids. At steady state, BCKDH holoenzyme preferentially binds BCKDK and BCKDHA is phosphorylated. In response to high levels of branched-chain alpha-keto acids, the inhibitory BCKDK is replaced by activating PPM1K leading to BCKDHA dephosphorylation and BCAA degradation. Mn(2+) is required as a cofactor.

The protein resides in the mitochondrion matrix. The enzyme catalyses O-phospho-L-seryl-[3-methyl-2-oxobutanoate dehydrogenase] + H2O = L-seryl-[3-methyl-2-oxobutanoate dehydrogenase] + phosphate. The catalysed reaction is O-phospho-L-seryl-[protein] + H2O = L-seryl-[protein] + phosphate. Its pathway is protein modification. With respect to regulation, up-regulated upon interaction with the 24-meric DBT/E2 core of the BCKDH complex. Inhibited by Mg(2+) and Ca(2+) ions likely by competing with Mn(2+) ions for binding to the same metal-binding sites. Serine/threonine-protein phosphatase component of macronutrients metabolism. Forms a functional kinase and phosphatase pair with BCKDK, serving as a metabolic regulatory node that coordinates branched-chain amino acids (BCAAs) with glucose and lipid metabolism via two distinct phosphoprotein targets: mitochondrial BCKDHA subunit of the branched-chain alpha-ketoacid dehydrogenase (BCKDH) complex and cytosolic ACLY, a lipogenic enzyme of Krebs cycle. At high levels of branched-chain ketoacids, dephosphorylates and activates mitochondrial BCKDH complex, a multisubunit complex consisting of three multimeric components each involved in different steps of BCAA catabolism: E1 composed of BCKDHA and BCKDHB, E2 core composed of DBT monomers, and E3 composed of DLD monomers. Tightly associates with the E2 component of BCKDH complex and dephosphorylates BCKDHA on Ser-337. Regulates the reversible phosphorylation of ACLY in response to changes in cellular carbohydrate abundance such as occurs during fasting to feeding metabolic transition. At fasting state, appears to dephosphorylate ACLY on Ser-455 and inactivate it. Refeeding stimulates MLXIPL/ChREBP transcription factor, leading to increased BCKDK to PPM1K expression ratio, phosphorylation and activation of ACLY that ultimately results in the generation of malonyl-CoA and oxaloacetate immediate substrates of de novo lipogenesis and gluconeogenesis, respectively. Recognizes phosphosites having SxS or RxxS motifs and strictly depends on Mn(2+) ions for the phosphatase activity. Regulates Ca(2+)-induced opening of mitochondrial transition pore and apoptotic cell death. This Homo sapiens (Human) protein is Protein phosphatase Mn(2+)-dependent 1K.